Reading from the N-terminus, the 346-residue chain is Methionine import ATP-binding protein MetN 1 (346 aa).

Residues 2–241 (IELKNVSKVF…PQHVTTKKFV (240 aa)) form the ABC transporter domain. An ATP-binding site is contributed by 38–45 (GYSGAGKS).

It belongs to the ABC transporter superfamily. Methionine importer (TC 3.A.1.24) family. The complex is composed of two ATP-binding proteins (MetN), two transmembrane proteins (MetI) and a solute-binding protein (MetQ).

Its subcellular location is the cell membrane. It carries out the reaction L-methionine(out) + ATP + H2O = L-methionine(in) + ADP + phosphate + H(+). It catalyses the reaction D-methionine(out) + ATP + H2O = D-methionine(in) + ADP + phosphate + H(+). Functionally, part of the ABC transporter complex MetNIQ involved in methionine import. Responsible for energy coupling to the transport system. This Bacillus cereus (strain ATCC 10987 / NRS 248) protein is Methionine import ATP-binding protein MetN 1.